A 749-amino-acid chain; its full sequence is Semaphorin-3B (749 aa).

The signal sequence occupies residues 1 to 24 (MGRAGAAAVIPGLALLWAVGLGSA). The Sema domain occupies 30-513 (RLRLSFQELQ…SRSAVAQIAL (484 aa)). Residue Asn82 is glycosylated (N-linked (GlcNAc...) asparagine). Cys102 and Cys113 are disulfide-bonded. The N-linked (GlcNAc...) asparagine glycan is linked to Asn124. Cystine bridges form between Cys131–Cys140, Cys269–Cys380, and Cys293–Cys340. An N-linked (GlcNAc...) asparagine glycan is attached at Asn427. Cystine bridges form between Cys516–Cys534 and Cys644–Cys710. One can recognise an Ig-like C2-type domain in the interval 573–659 (PALLEHKVFG…GFTQPLRRLS (87 aa)). The disordered stretch occupies residues 702-749 (GSANSLRMCRPQPALQSLPLESRRKGRNRRTHAPEPRAERGPRSATHW). The segment covering 733 to 743 (HAPEPRAERGP) has biased composition (basic and acidic residues).

The protein belongs to the semaphorin family. As to expression, expressed abundantly but differentially in a variety of neural and nonneural tissues.

The protein localises to the secreted. Its subcellular location is the endoplasmic reticulum. In terms of biological role, inhibits axonal extension by providing local signals to specify territories inaccessible for growing axons. The chain is Semaphorin-3B (SEMA3B) from Homo sapiens (Human).